The chain runs to 426 residues: Kelch repeat-containing protein At3g27220 (426 aa).

Residues 18 to 38 traverse the membrane as a helical segment; the sequence is LMLVLYFTSVLGIGFIAAFLC. Kelch repeat units lie at residues 123–170, 173–222, 224–275, 276–338, and 341–394; these read LLYV…IVTD, YVYV…IWRG, LHVM…VAND, KLLV…WIIV, and SIVI…FWNG.

It is found in the membrane. This is Kelch repeat-containing protein At3g27220 from Arabidopsis thaliana (Mouse-ear cress).